The primary structure comprises 261 residues: MRILITNDDGINAPGLEVLAEIAAEIAGPGGEVWTVAPAFEQSGVGHCISYTQPTMIAELGPRRYAAEGSPADCVMAGLYDVMNGDAPDLILSGVNRGNNSGENALYSGTLGGAMEGALQGHKAIALSQYYGPAMATADDPFDAARRHGVAVVRKLLAADQWGGPGYGTFYNVNFPPVLAAGVKGVRAAPQGLRSHARFRVEAQLSPSGRRFLWVQGSAQNVPAEQGSDVSLNLDGYISVTPMRADLTAYDKLADLEAALA.

Residues Asp-8, Asp-9, Ser-43, and Asn-96 each coordinate a divalent metal cation.

This sequence belongs to the SurE nucleotidase family. The cofactor is a divalent metal cation.

It localises to the cytoplasm. The catalysed reaction is a ribonucleoside 5'-phosphate + H2O = a ribonucleoside + phosphate. Its function is as follows. Nucleotidase that shows phosphatase activity on nucleoside 5'-monophosphates. This chain is 5'-nucleotidase SurE, found in Dinoroseobacter shibae (strain DSM 16493 / NCIMB 14021 / DFL 12).